The primary structure comprises 278 residues: Pyrroline-5-carboxylate reductase (278 aa).

This sequence belongs to the pyrroline-5-carboxylate reductase family.

The protein localises to the cytoplasm. It catalyses the reaction L-proline + NADP(+) = (S)-1-pyrroline-5-carboxylate + NADPH + 2 H(+). The catalysed reaction is L-proline + NAD(+) = (S)-1-pyrroline-5-carboxylate + NADH + 2 H(+). It functions in the pathway amino-acid biosynthesis; L-proline biosynthesis; L-proline from L-glutamate 5-semialdehyde: step 1/1. The polypeptide is Pyrroline-5-carboxylate reductase (Actinidia chinensis var. chinensis (Chinese soft-hair kiwi)).